A 298-amino-acid polypeptide reads, in one-letter code: N-acetylmuramic acid 6-phosphate etherase (298 aa).

The SIS domain maps to 55–218 (ASKRYREGGR…STGVMIKQGK (164 aa)). Glutamate 83 functions as the Proton donor in the catalytic mechanism. Glutamate 114 is a catalytic residue.

Belongs to the GCKR-like family. MurNAc-6-P etherase subfamily. In terms of assembly, homodimer.

The catalysed reaction is N-acetyl-D-muramate 6-phosphate + H2O = N-acetyl-D-glucosamine 6-phosphate + (R)-lactate. It participates in amino-sugar metabolism; N-acetylmuramate degradation. Functionally, specifically catalyzes the cleavage of the D-lactyl ether substituent of MurNAc 6-phosphate, producing GlcNAc 6-phosphate and D-lactate. This Lactobacillus johnsonii (strain CNCM I-12250 / La1 / NCC 533) protein is N-acetylmuramic acid 6-phosphate etherase.